The chain runs to 254 residues: uncharacterized protein (254 aa).

This is an uncharacterized protein from Haemophilus influenzae (strain ATCC 51907 / DSM 11121 / KW20 / Rd).